Reading from the N-terminus, the 502-residue chain is C2H2-type transcription factor MSN2 (502 aa).

2 consecutive C2H2-type zinc fingers follow at residues 385-408 (FVCHLCTRRFRRQEHLKRHFRSLH) and 414-436 (FACGECGKKFSRSDNLTQHSRIH).

The protein localises to the nucleus. In terms of biological role, key downstream transcription factor in the HOG1-MAPK pathway. Plays crucial roles in the regulation of growth, conidiation, trap development and fatty acid metabolism. Negatively regulates secondary metabolism such as arthrobotrisins biosynthesis.Also regulates autophagy and endocytosis. This is C2H2-type transcription factor MSN2 from Arthrobotrys oligospora (strain ATCC 24927 / CBS 115.81 / DSM 1491) (Nematode-trapping fungus).